Here is a 163-residue protein sequence, read N- to C-terminus: E3 ubiquitin-protein ligase ATL23 (163 aa).

A helical transmembrane segment spans residues 35-55; sequence ALLLPCVGMCIVFLIYLFLLW. The RING-type; atypical zinc finger occupies 104-146; sequence CAVCLEDIESGQSTRLVPGCNHGFHQLCADTWLSNHTVCPVCR.

Belongs to the RING-type zinc finger family. ATL subfamily.

It is found in the membrane. The catalysed reaction is S-ubiquitinyl-[E2 ubiquitin-conjugating enzyme]-L-cysteine + [acceptor protein]-L-lysine = [E2 ubiquitin-conjugating enzyme]-L-cysteine + N(6)-ubiquitinyl-[acceptor protein]-L-lysine.. The protein operates within protein modification; protein ubiquitination. Functionally, E3 ubiquitin-protein ligase able to catalyze polyubiquitination with ubiquitin-conjugating enzyme E2 UBC8, UBC10, UBC11, UBC28 and UBC29 in vitro. This Arabidopsis thaliana (Mouse-ear cress) protein is E3 ubiquitin-protein ligase ATL23 (ATL23).